A 719-amino-acid chain; its full sequence is Capsid protein (719 aa).

The tract at residues 647-678 (GDALPSRERKRQAWQDSTSEETESEAEAQEEK) is disordered. The segment covering 664–674 (TSEETESEAEA) has biased composition (acidic residues).

Belongs to the anelloviridae capsid protein family.

It localises to the virion. Functionally, self assemble to form an icosahedral capsid. This Torque teno virus (isolate Human/Germany/KAV/2001) (TTV) protein is Capsid protein.